The chain runs to 347 residues: Phosphate acyltransferase (347 aa).

The protein belongs to the PlsX family. Homodimer. Probably interacts with PlsY.

The protein resides in the cytoplasm. The enzyme catalyses a fatty acyl-[ACP] + phosphate = an acyl phosphate + holo-[ACP]. Its pathway is lipid metabolism; phospholipid metabolism. Its function is as follows. Catalyzes the reversible formation of acyl-phosphate (acyl-PO(4)) from acyl-[acyl-carrier-protein] (acyl-ACP). This enzyme utilizes acyl-ACP as fatty acyl donor, but not acyl-CoA. In Sinorhizobium medicae (strain WSM419) (Ensifer medicae), this protein is Phosphate acyltransferase.